An 87-amino-acid polypeptide reads, in one-letter code: Antitoxin epsilon (87 aa).

It belongs to the epsilon antitoxin family. In the presence of the zeta toxin, forms an inactive PezA(2)PezT(2) heterotetramer.

Antitoxin component of a type II toxin-antitoxin (TA) system. Neutralizes the toxic effect of cognate zeta toxin. Part of a postsegregational killing (PSK) system involved in the killing of plasmid-free cells. Continuous synthesis of the epsilon antitoxin is required to counteract the zeta toxin. In Lactococcus lactis subsp. lactis (Streptococcus lactis), this protein is Antitoxin epsilon.